Here is a 294-residue protein sequence, read N- to C-terminus: 33 kDa chaperonin (294 aa).

Cystine bridges form between Cys-238/Cys-240 and Cys-271/Cys-274.

Belongs to the HSP33 family. Post-translationally, under oxidizing conditions two disulfide bonds are formed involving the reactive cysteines. Under reducing conditions zinc is bound to the reactive cysteines and the protein is inactive.

It localises to the cytoplasm. Redox regulated molecular chaperone. Protects both thermally unfolding and oxidatively damaged proteins from irreversible aggregation. Plays an important role in the bacterial defense system toward oxidative stress. The polypeptide is 33 kDa chaperonin (Staphylococcus carnosus (strain TM300)).